Reading from the N-terminus, the 195-residue chain is Elongation factor P (195 aa).

This sequence belongs to the elongation factor P family.

It is found in the cytoplasm. Its pathway is protein biosynthesis; polypeptide chain elongation. Functionally, involved in peptide bond synthesis. Stimulates efficient translation and peptide-bond synthesis on native or reconstituted 70S ribosomes in vitro. Probably functions indirectly by altering the affinity of the ribosome for aminoacyl-tRNA, thus increasing their reactivity as acceptors for peptidyl transferase. This chain is Elongation factor P, found in Rhodopirellula baltica (strain DSM 10527 / NCIMB 13988 / SH1).